Here is a 363-residue protein sequence, read N- to C-terminus: Lipase (363 aa).

Residues 1-24 (MVLKQRANYLGFLIVFFTAFLVEA) form the signal peptide. Residues 25 to 94 (VPIKRQSNST…SYPDSVVQAM (70 aa)) constitute a propeptide that is removed on maturation. The segment at 33–69 (STVDSLPPLIPSRTSAPSSSPSTTDPEAPAMSRNGPL) is disordered. Low complexity predominate over residues 43-62 (PSRTSAPSSSPSTTDPEAPA). 3 disulfide bridges follow: Cys123-Cys362, Cys134-Cys137, and Cys329-Cys338. Residue Ser238 is the Nucleophile of the active site. Catalysis depends on Asp297, which acts as the Charge relay system. Asp350 is a Ca(2+) binding site. Catalysis depends on His351, which acts as the Charge relay system.

This sequence belongs to the AB hydrolase superfamily. Lipase family.

The catalysed reaction is a triacylglycerol + H2O = a diacylglycerol + a fatty acid + H(+). The protein is Lipase of Rhizomucor miehei.